The sequence spans 254 residues: 3-deoxy-manno-octulosonate cytidylyltransferase (254 aa).

The protein belongs to the KdsB family.

The protein localises to the cytoplasm. It carries out the reaction 3-deoxy-alpha-D-manno-oct-2-ulosonate + CTP = CMP-3-deoxy-beta-D-manno-octulosonate + diphosphate. Its pathway is nucleotide-sugar biosynthesis; CMP-3-deoxy-D-manno-octulosonate biosynthesis; CMP-3-deoxy-D-manno-octulosonate from 3-deoxy-D-manno-octulosonate and CTP: step 1/1. The protein operates within bacterial outer membrane biogenesis; lipopolysaccharide biosynthesis. Its function is as follows. Activates KDO (a required 8-carbon sugar) for incorporation into bacterial lipopolysaccharide in Gram-negative bacteria. This chain is 3-deoxy-manno-octulosonate cytidylyltransferase, found in Bordetella bronchiseptica (strain ATCC BAA-588 / NCTC 13252 / RB50) (Alcaligenes bronchisepticus).